The primary structure comprises 380 residues: Cytochrome b (380 aa).

Helical transmembrane passes span 34–54 (FGSLLGICLMTQILTGLLLAM), 78–99 (WLIRNLHANGASFFFICIYFHI), 114–134 (WNTGVILLLTLMATAFVGYVL), and 179–199 (FFALHFLLPFMIAGLTLIHLT). Residues His-84 and His-98 each contribute to the heme b site. The heme b site is built by His-183 and His-197. His-202 serves as a coordination point for a ubiquinone. Helical transmembrane passes span 227–247 (LKDILGFTLMFLPLTTLALFS), 289–309 (LGGVLALAASVLILFLIPFLH), 321–341 (ISQLLFWILVANLLILTWVGS), and 348–368 (FIIIGQLASVTYFTILLVLFP).

The protein belongs to the cytochrome b family. As to quaternary structure, the cytochrome bc1 complex contains 11 subunits: 3 respiratory subunits (MT-CYB, CYC1 and UQCRFS1), 2 core proteins (UQCRC1 and UQCRC2) and 6 low-molecular weight proteins (UQCRH/QCR6, UQCRB/QCR7, UQCRQ/QCR8, UQCR10/QCR9, UQCR11/QCR10 and a cleavage product of UQCRFS1). This cytochrome bc1 complex then forms a dimer. Heme b serves as cofactor.

It localises to the mitochondrion inner membrane. Component of the ubiquinol-cytochrome c reductase complex (complex III or cytochrome b-c1 complex) that is part of the mitochondrial respiratory chain. The b-c1 complex mediates electron transfer from ubiquinol to cytochrome c. Contributes to the generation of a proton gradient across the mitochondrial membrane that is then used for ATP synthesis. This chain is Cytochrome b (MT-CYB), found in Pachyptila salvini (Salvin's prion).